Reading from the N-terminus, the 185-residue chain is Sarcoplasmic calcium-binding proteins I, III, and IV (185 aa).

EF-hand domains are found at residues 5–41 (FQKQKIKFTFDFFLDYNKDGSIQWEDFEEMIKRYKEV), 57–92 (SLEDEWRDLKGRADINKDDVVSWEEYLAMWEKTIAT), 102–137 (WCQNRIPFLFKGMDVSGDGIVDLEEFQNYCKNFQLQ), and 138–173 (CADVPAVYNVITDGGKVTFDLNRYKELYYRLLTSPA). 13 residues coordinate Ca(2+): D19, N21, D23, S25, D30, D70, N72, D74, E81, D115, S117, D119, and E126.

Functionally, like parvalbumins, SCPs seem to be more abundant in fast contracting muscles, but no functional relationship can be established from this distribution. The chain is Sarcoplasmic calcium-binding proteins I, III, and IV from Branchiostoma lanceolatum (Common lancelet).